The sequence spans 338 residues: Anthranilate phosphoribosyltransferase (338 aa).

5-phospho-alpha-D-ribose 1-diphosphate contacts are provided by residues Gly-80, 83–84 (GD), Thr-88, 90–93 (NIST), 108–116 (KHGNRSVSS), and Ser-120. Position 80 (Gly-80) interacts with anthranilate. Ser-92 contacts Mg(2+). Asn-111 is an anthranilate binding site. Arg-166 lines the anthranilate pocket. The Mg(2+) site is built by Asp-225 and Glu-226.

It belongs to the anthranilate phosphoribosyltransferase family. As to quaternary structure, homodimer. Mg(2+) serves as cofactor.

The enzyme catalyses N-(5-phospho-beta-D-ribosyl)anthranilate + diphosphate = 5-phospho-alpha-D-ribose 1-diphosphate + anthranilate. Its pathway is amino-acid biosynthesis; L-tryptophan biosynthesis; L-tryptophan from chorismate: step 2/5. Functionally, catalyzes the transfer of the phosphoribosyl group of 5-phosphorylribose-1-pyrophosphate (PRPP) to anthranilate to yield N-(5'-phosphoribosyl)-anthranilate (PRA). This Desulfatibacillum aliphaticivorans protein is Anthranilate phosphoribosyltransferase.